We begin with the raw amino-acid sequence, 689 residues long: Glycine--tRNA ligase beta subunit (689 aa).

This sequence belongs to the class-II aminoacyl-tRNA synthetase family. Tetramer of two alpha and two beta subunits.

It localises to the cytoplasm. The enzyme catalyses tRNA(Gly) + glycine + ATP = glycyl-tRNA(Gly) + AMP + diphosphate. This chain is Glycine--tRNA ligase beta subunit, found in Shewanella baltica (strain OS155 / ATCC BAA-1091).